The sequence spans 214 residues: Probable transaldolase (214 aa).

Lysine 83 acts as the Schiff-base intermediate with substrate in catalysis.

The protein belongs to the transaldolase family. Type 3B subfamily.

The protein resides in the cytoplasm. It carries out the reaction D-sedoheptulose 7-phosphate + D-glyceraldehyde 3-phosphate = D-erythrose 4-phosphate + beta-D-fructose 6-phosphate. Its pathway is carbohydrate degradation; pentose phosphate pathway; D-glyceraldehyde 3-phosphate and beta-D-fructose 6-phosphate from D-ribose 5-phosphate and D-xylulose 5-phosphate (non-oxidative stage): step 2/3. In terms of biological role, transaldolase is important for the balance of metabolites in the pentose-phosphate pathway. This chain is Probable transaldolase, found in Brevibacillus brevis (strain 47 / JCM 6285 / NBRC 100599).